The primary structure comprises 111 residues: Iron-sulfur cluster insertion protein ErpA (111 aa).

Residues Cys39, Cys103, and Cys105 each coordinate iron-sulfur cluster.

It belongs to the HesB/IscA family. As to quaternary structure, homodimer. Iron-sulfur cluster is required as a cofactor.

Required for insertion of 4Fe-4S clusters for at least IspG. The polypeptide is Iron-sulfur cluster insertion protein ErpA (Acinetobacter baumannii (strain SDF)).